The sequence spans 76 residues: Putative protein StbC (76 aa).

The protein is Putative protein StbC (stbC) of Escherichia coli.